The following is a 266-amino-acid chain: Phosphatidylglycerol--prolipoprotein diacylglyceryl transferase (266 aa).

The next 7 helical transmembrane spans lie at 10-30, 56-76, 92-112, 120-140, 171-191, 199-219, and 233-253; these read VALA…LIGI, LVFW…VLFY, WKGG…VWWF, FFQL…AGRI, PSQL…LWLF, ASVS…VEFV, and WLTM…ALMV. Arg139 serves as a coordination point for a 1,2-diacyl-sn-glycero-3-phospho-(1'-sn-glycerol).

This sequence belongs to the Lgt family.

It localises to the cell inner membrane. The catalysed reaction is L-cysteinyl-[prolipoprotein] + a 1,2-diacyl-sn-glycero-3-phospho-(1'-sn-glycerol) = an S-1,2-diacyl-sn-glyceryl-L-cysteinyl-[prolipoprotein] + sn-glycerol 1-phosphate + H(+). It participates in protein modification; lipoprotein biosynthesis (diacylglyceryl transfer). Its function is as follows. Catalyzes the transfer of the diacylglyceryl group from phosphatidylglycerol to the sulfhydryl group of the N-terminal cysteine of a prolipoprotein, the first step in the formation of mature lipoproteins. This Pseudomonas aeruginosa (strain LESB58) protein is Phosphatidylglycerol--prolipoprotein diacylglyceryl transferase.